Consider the following 247-residue polypeptide: Auxin-responsive protein IAA13 (247 aa).

Positions 14–18 (LELGL) match the EAR-like (transcriptional repression) motif. The span at 25–40 (GTAAKIGKSGGGGAWG) shows a compositional bias: gly residues. 2 disordered regions span residues 25 to 44 (GTAA…ERGR) and 49 to 119 (KDFP…PKDV). Residues 62–75 (SASHAGSSPPRSSS) are compositionally biased toward low complexity. The segment covering 87–98 (RMNSLVNNQATK) has biased composition (polar residues). The span at 106 to 119 (AGKKKVKDDEPKDV) shows a compositional bias: basic and acidic residues. A PB1 domain is found at 129 to 225 (VGFIKVNMDG…SVKRLRVMKT (97 aa)).

Belongs to the Aux/IAA family. In terms of assembly, homodimers and heterodimers. Interacts with TPL. As to expression, preferentially expressed in stems.

The protein resides in the nucleus. In terms of biological role, aux/IAA proteins are short-lived transcriptional factors that function as repressors of early auxin response genes at low auxin concentrations. Repression is thought to result from the interaction with auxin response factors (ARFs), proteins that bind to the auxin-responsive promoter element (AuxRE). Formation of heterodimers with ARF proteins may alter their ability to modulate early auxin response genes expression. The polypeptide is Auxin-responsive protein IAA13 (IAA13) (Arabidopsis thaliana (Mouse-ear cress)).